The following is a 364-amino-acid chain: Probable G-protein coupled receptor AH9.4 (364 aa).

Position 1 (M1) is a topological domain, extracellular. Residues 2–22 (AFLQSAYLVMVFTVPIAGVIL) form a helical membrane-spanning segment. Topologically, residues 23 to 48 (NTYVLRKLIRVARKSVVRFETTSGLP) are cytoplasmic. A helical transmembrane segment spans residues 49-69 (LAAMSVGDSITLCALLMQAIF). Over 70 to 89 (HITPKGEVPTVVLSSICKFG) the chain is Extracellular. A helical transmembrane segment spans residues 90–110 (IFLIHSTSAFSVWCWFFLSVL). The Cytoplasmic segment spans residues 111 to 130 (RYIAVFHPFKYRTIWRQPRN). The chain crosses the membrane as a helical span at residues 131-151 (ALKFLAGAVGMFQIYTLIFVT). Topologically, residues 152–177 (YRQEEKSCGEYDVFHESAFKHVHLLD) are extracellular. A helical membrane pass occupies residues 178–198 (IFLFYAIPSLLRITLDFLVLI). Over 199 to 277 (HCYSPFSVEG…KKKTAMVMRS (79 aa)) the chain is Cytoplasmic. The helical transmembrane segment at 278–298 (ILISVLNLLLNLPSHIFRAWA) threads the bilayer. The Extracellular segment spans residues 299–315 (SYDESSLENEIVRTLEP). Residues 316 to 336 (IAQMMYFSQFACNAFYLATSI) form a helical membrane-spanning segment. Residues 337 to 364 (YETNGSPRNTVISSSNRHVSRCISDDEA) are Cytoplasmic-facing.

Belongs to the G-protein coupled receptor 1 family.

The protein resides in the cell membrane. In terms of biological role, not known. Putative receptor. In Caenorhabditis elegans, this protein is Probable G-protein coupled receptor AH9.4.